A 372-amino-acid chain; its full sequence is Fatty acid 2-hydroxylase (372 aa).

The Cytochrome b5 heme-binding domain maps to Ala-8–Arg-86. Residues His-43 and His-69 each contribute to the heme site. A run of 2 helical transmembrane segments spans residues Val-168–Tyr-188 and Ser-213–Ile-233. Residues Phe-219–Thr-361 form the Fatty acid hydroxylase domain. Residues His-234, His-239, His-257, His-260, and His-261 each coordinate Zn(2+). Helical transmembrane passes span Ser-268 to Leu-288 and Leu-290 to Leu-310. Zn(2+) is bound by residues His-315, His-319, His-336, His-339, and His-340.

The protein belongs to the sterol desaturase family. SCS7 subfamily. It depends on Zn(2+) as a cofactor. In terms of tissue distribution, expressed in brain (at protein level). Detected in cerebellum and forebrain. Expression in the white matter is mainly restricted in oligodendrocytes. Expressed in stomach, kidney, skin and testis. Expressed in sebaceous gland.

Its subcellular location is the endoplasmic reticulum membrane. The protein resides in the microsome membrane. The catalysed reaction is a 1,2-saturated fatty acid + 2 Fe(II)-[cytochrome b5] + O2 + 2 H(+) = a (R)-2-hydroxy fatty acid + 2 Fe(III)-[cytochrome b5] + H2O. The enzyme catalyses hexadecanoate + 2 Fe(II)-[cytochrome b5] + O2 + 2 H(+) = (R)-2-hydroxyhexadecanoate + 2 Fe(III)-[cytochrome b5] + H2O. It catalyses the reaction octadecanoate + 2 Fe(II)-[cytochrome b5] + O2 + 2 H(+) = (R)-2-hydroxyoctadecanoate + 2 Fe(III)-[cytochrome b5] + H2O. It carries out the reaction docosanoate + 2 Fe(II)-[cytochrome b5] + O2 + 2 H(+) = 2-hydroxydocosanoate + 2 Fe(III)-[cytochrome b5] + H2O. The catalysed reaction is tetracosanoate + 2 Fe(II)-[cytochrome b5] + O2 + 2 H(+) = (R)-2-hydroxytetracosanoate + 2 Fe(III)-[cytochrome b5] + H2O. It participates in sphingolipid metabolism; galactosylceramide biosynthesis. It functions in the pathway lipid metabolism; fatty acid metabolism. Its function is as follows. Catalyzes the hydroxylation of free fatty acids at the C-2 position to produce 2-hydroxy fatty acids, which are building blocks of sphingolipids and glycosphingolipids common in neural tissue and epidermis. FA2H is stereospecific for the production of (R)-2-hydroxy fatty acids. Plays an essential role in the synthesis of galactosphingolipids of the myelin sheath. Responsible for the synthesis of sphingolipids and glycosphingolipids involved in the formation of epidermal lamellar bodies critical for skin permeability barrier. Participates in the synthesis of glycosphingolipids and a fraction of type II wax diesters in sebaceous gland, specifically regulating hair follicle homeostasis. Involved in the synthesis of sphingolipids of plasma membrane rafts, controlling lipid raft mobility and trafficking of raft-associated proteins. The protein is Fatty acid 2-hydroxylase of Mus musculus (Mouse).